The primary structure comprises 215 residues: Osmoprotectant import permease protein OsmW (215 aa).

The 185-residue stretch at 18–202 (TFQHLWLVAL…LLAIVLDWLL (185 aa)) folds into the ABC transmembrane type-1 domain. The next 6 membrane-spanning stretches (helical) occupy residues 24-44 (LVALAVGLAIIIGVPLGVLIV), 51-73 (TPVLGAATLLLTIPSIALFGLMI), 78-100 (LIGHGIGVLPAVTAVFLYSLLPI), 132-152 (WVEIPMALPVIFGGIRTAVVM), 153-173 (NIGVMAIAAVIGAGGLGLLLL), and 183-203 (MLIAGALMICLLAIVLDWLLH).

Belongs to the binding-protein-dependent transport system permease family. As to quaternary structure, the complex is composed of two ATP-binding proteins (OsmV), two transmembrane proteins (OsmW and OsmY) and a solute-binding protein (OsmX).

Its subcellular location is the cell inner membrane. In terms of biological role, part of the OsmU ABC transporter complex, which is involved in the uptake of osmoprotectants such as choline-O-sulfate and glycine betaine. Probably responsible for the translocation of the substrate across the membrane. The protein is Osmoprotectant import permease protein OsmW (osmW) of Salmonella typhimurium (strain LT2 / SGSC1412 / ATCC 700720).